The following is a 356-amino-acid chain: Protein-glutamate methylesterase/protein-glutamine glutaminase (356 aa).

A Response regulatory domain is found at 4–121 (KVLIVDDSAL…QSGMLEYTDL (118 aa)). A 4-aspartylphosphate modification is found at aspartate 55. The CheB-type methylesterase domain occupies 156 to 349 (PLTSSEKLII…RRVLEFFAAH (194 aa)). Active-site residues include serine 169, histidine 195, and aspartate 291.

Belongs to the CheB family. In terms of processing, phosphorylated by CheA. Phosphorylation of the N-terminal regulatory domain activates the methylesterase activity.

The protein localises to the cytoplasm. The enzyme catalyses [protein]-L-glutamate 5-O-methyl ester + H2O = L-glutamyl-[protein] + methanol + H(+). It carries out the reaction L-glutaminyl-[protein] + H2O = L-glutamyl-[protein] + NH4(+). Its function is as follows. Involved in chemotaxis. Part of a chemotaxis signal transduction system that modulates chemotaxis in response to various stimuli. Catalyzes the demethylation of specific methylglutamate residues introduced into the chemoreceptors (methyl-accepting chemotaxis proteins or MCP) by CheR. Also mediates the irreversible deamidation of specific glutamine residues to glutamic acid. This chain is Protein-glutamate methylesterase/protein-glutamine glutaminase, found in Thiobacillus denitrificans (strain ATCC 25259 / T1).